Reading from the N-terminus, the 307-residue chain is Methionyl-tRNA formyltransferase (307 aa).

Residue 108–111 (SLLP) participates in (6S)-5,6,7,8-tetrahydrofolate binding.

It belongs to the Fmt family.

It carries out the reaction L-methionyl-tRNA(fMet) + (6R)-10-formyltetrahydrofolate = N-formyl-L-methionyl-tRNA(fMet) + (6S)-5,6,7,8-tetrahydrofolate + H(+). In terms of biological role, attaches a formyl group to the free amino group of methionyl-tRNA(fMet). The formyl group appears to play a dual role in the initiator identity of N-formylmethionyl-tRNA by promoting its recognition by IF2 and preventing the misappropriation of this tRNA by the elongation apparatus. This chain is Methionyl-tRNA formyltransferase, found in Xylella fastidiosa (strain M23).